Consider the following 113-residue polypeptide: Non-specific lipid-transfer protein (113 aa).

The signal sequence occupies residues A1–I24. Intrachain disulfides connect C26/C73, C36/C50, C51/C96, and C71/C110. D30 carries Cis-14-hydroxy-10,13-dioxo-7-heptadecenoic acid aspartate ester lipidation.

It belongs to the plant LTP family.

Functionally, plant non-specific lipid-transfer proteins transfer phospholipids as well as galactolipids across membranes. May play a role in wax or cutin deposition in the cell walls of expanding epidermal cells and certain secretory tissues. The sequence is that of Non-specific lipid-transfer protein from Triticum aestivum (Wheat).